We begin with the raw amino-acid sequence, 420 residues long: UDP-N-acetylglucosamine 1-carboxyvinyltransferase (420 aa).

22 to 23 (KN) provides a ligand contact to phosphoenolpyruvate. Arginine 91 contributes to the UDP-N-acetyl-alpha-D-glucosamine binding site. Cysteine 115 acts as the Proton donor in catalysis. At cysteine 115 the chain carries 2-(S-cysteinyl)pyruvic acid O-phosphothioketal. UDP-N-acetyl-alpha-D-glucosamine contacts are provided by residues 120–124 (RPVDL), 160–163 (KVSV), aspartate 305, and isoleucine 327.

It belongs to the EPSP synthase family. MurA subfamily.

The protein localises to the cytoplasm. It carries out the reaction phosphoenolpyruvate + UDP-N-acetyl-alpha-D-glucosamine = UDP-N-acetyl-3-O-(1-carboxyvinyl)-alpha-D-glucosamine + phosphate. It participates in cell wall biogenesis; peptidoglycan biosynthesis. Cell wall formation. Adds enolpyruvyl to UDP-N-acetylglucosamine. This Erwinia tasmaniensis (strain DSM 17950 / CFBP 7177 / CIP 109463 / NCPPB 4357 / Et1/99) protein is UDP-N-acetylglucosamine 1-carboxyvinyltransferase.